Consider the following 454-residue polypeptide: Sensor histidine kinase YkoH (454 aa).

Over 1-12 (MKLKTKIHLYTS) the chain is Cytoplasmic. Residues 13–33 (ISLLILLILVHTAVYLIFSSA) traverse the membrane as a helical segment. Over 34 to 153 (LTSKDAARLA…NTEESLFLLK (120 aa)) the chain is Extracellular. The chain crosses the membrane as a helical span at residues 154–174 (IILIAASAAVCIASFFAGSLL). The Cytoplasmic portion of the chain corresponds to 175 to 454 (ARRIINPIRR…QFSEQNGGGR (280 aa)). In terms of domain architecture, HAMP spans 176–230 (RRIINPIRRLMITMKDIQRDKEFKTISLEGQSNDELYQMGLTFNEMAMMLKEHYD). Residues 238 to 450 (DASHELKTPL…AVTMQFSEQN (213 aa)) form the Histidine kinase domain. Phosphohistidine; by autocatalysis is present on histidine 241.

Its subcellular location is the cell membrane. It carries out the reaction ATP + protein L-histidine = ADP + protein N-phospho-L-histidine.. In terms of biological role, probable member of the two-component regulatory system YkoH/YkoG. Potentially phosphorylates YkoG. This is Sensor histidine kinase YkoH (ykoH) from Bacillus subtilis (strain 168).